The chain runs to 270 residues: Purine nucleoside phosphorylase BT_4389 (270 aa).

Positions 79, 124, and 141 each coordinate Zn(2+).

The protein belongs to the purine nucleoside phosphorylase YfiH/LACC1 family. As to quaternary structure, homodimer. Cu(2+) is required as a cofactor. It depends on Zn(2+) as a cofactor.

It catalyses the reaction adenosine + phosphate = alpha-D-ribose 1-phosphate + adenine. The catalysed reaction is S-methyl-5'-thioadenosine + phosphate = 5-(methylsulfanyl)-alpha-D-ribose 1-phosphate + adenine. The enzyme catalyses inosine + phosphate = alpha-D-ribose 1-phosphate + hypoxanthine. It carries out the reaction adenosine + H2O + H(+) = inosine + NH4(+). Functionally, purine nucleoside enzyme that catalyzes the phosphorolysis of adenosine and inosine nucleosides, yielding D-ribose 1-phosphate and the respective free bases, adenine and hypoxanthine. Also catalyzes the phosphorolysis of S-methyl-5'-thioadenosine into adenine and S-methyl-5-thio-alpha-D-ribose 1-phosphate. Also has adenosine deaminase activity. In Bacteroides thetaiotaomicron (strain ATCC 29148 / DSM 2079 / JCM 5827 / CCUG 10774 / NCTC 10582 / VPI-5482 / E50), this protein is Purine nucleoside phosphorylase BT_4389.